The chain runs to 413 residues: Histidinol-phosphate aminotransferase, chloroplastic (413 aa).

The transit peptide at 1–35 (MGVIELCNTSSICIGRAKPSCCSIERNQRRRIICM) directs the protein to the chloroplast. K273 carries the N6-(pyridoxal phosphate)lysine modification.

It belongs to the class-II pyridoxal-phosphate-dependent aminotransferase family. Histidinol-phosphate aminotransferase subfamily. Homodimer. Requires pyridoxal 5'-phosphate as cofactor. In terms of tissue distribution, mainly expressed in green tissues.

It localises to the plastid. It is found in the chloroplast. The enzyme catalyses L-histidinol phosphate + 2-oxoglutarate = 3-(imidazol-4-yl)-2-oxopropyl phosphate + L-glutamate. It participates in amino-acid biosynthesis; L-histidine biosynthesis; L-histidine from 5-phospho-alpha-D-ribose 1-diphosphate: step 7/9. In Nicotiana tabacum (Common tobacco), this protein is Histidinol-phosphate aminotransferase, chloroplastic (HPA).